A 291-amino-acid polypeptide reads, in one-letter code: N-acetylmannosamine kinase (291 aa).

ATP-binding positions include 5–12 (AIDIGGTK) and 132–139 (GVGGGVVC). 4 residues coordinate Zn(2+): H156, C166, C168, and C173.

It belongs to the ROK (NagC/XylR) family. NanK subfamily. Homodimer.

It catalyses the reaction an N-acyl-D-mannosamine + ATP = an N-acyl-D-mannosamine 6-phosphate + ADP + H(+). It participates in amino-sugar metabolism; N-acetylneuraminate degradation; D-fructose 6-phosphate from N-acetylneuraminate: step 2/5. In terms of biological role, catalyzes the phosphorylation of N-acetylmannosamine (ManNAc) to ManNAc-6-P. This is N-acetylmannosamine kinase from Salmonella dublin (strain CT_02021853).